Reading from the N-terminus, the 186-residue chain is HGPRTase-like protein 3 (186 aa).

The protein belongs to the purine/pyrimidine phosphoribosyltransferase family. Archaeal HPRT subfamily.

Its function is as follows. May catalyze a purine salvage reaction, the substrate is unknown. The polypeptide is HGPRTase-like protein 3 (Haloterrigena turkmenica (strain ATCC 51198 / DSM 5511 / JCM 9101 / NCIMB 13204 / VKM B-1734 / 4k) (Halococcus turkmenicus)).